A 504-amino-acid polypeptide reads, in one-letter code: MSFSVDVLANIAIELQRGIGHQDRFQRLITTLRQVLECDASALLRYDSRQFIPLAIDGLAKDVLGRRFALEGHPRLEAIARAGDVVRFPADSELPDPYDGLIPGQESLKVHACVGLPLFAGQNLIGALTLDGMQPDQFDVFSNEELRLIAALAAGALSNALLIEQLESQNMLPGDAASFEAVKQTQMIGLSPGMTQLKKEIEIVAASDLNVLISGETGTGKELVAKAIHEASPRAVNPLVYLNCAALPESVAESELFGHVKGAFTGAISNRSGKFEMADNGTLFLDEIGELSLALQAKLLRVLQYGDIQRVGDDRSLRVDVRVLAATNRDLREEVLAGRFRADLFHRLSVFPLSVPPLRERGDDVILLAGYFCEQCRLRLGLSRVVLSAGARNLLQHYNFPGNVRELEHAIHRAVVLARATRSGDEVILEAQHFAFPEVTLPPPEVAAVPVVKQNLREATEAFQRETIRQALAQNHHNWAACARMLETDVANLHRLAKRLGLKD.

Asp-57 is subject to 4-aspartylphosphate. Residues 187 to 416 form the Sigma-54 factor interaction domain; it reads MIGLSPGMTQ…LEHAIHRAVV (230 aa). ATP-binding positions include 215–222 and 278–287; these read GETGTGKE and ADNGTLFLDE. Positions 479 to 498 form a DNA-binding region, H-T-H motif; that stretch reads WAACARMLETDVANLHRLAK.

Its pathway is nitrogen metabolism; nitric oxide reduction. In terms of biological role, required for the expression of anaerobic nitric oxide (NO) reductase, acts as a transcriptional activator for at least the norVW operon. Activation also requires sigma-54. The chain is Anaerobic nitric oxide reductase transcription regulator NorR from Escherichia coli O81 (strain ED1a).